Reading from the N-terminus, the 166-residue chain is Lipoprotein signal peptidase (166 aa).

4 helical membrane-spanning segments follow: residues Ala9 to Leu29, Ala45 to Leu65, Trp71 to Leu91, and Phe100 to Val120. Active-site residues include Asp126 and Asp144. Residues Trp135–Val155 traverse the membrane as a helical segment.

Belongs to the peptidase A8 family.

It localises to the cell inner membrane. It catalyses the reaction Release of signal peptides from bacterial membrane prolipoproteins. Hydrolyzes -Xaa-Yaa-Zaa-|-(S,diacylglyceryl)Cys-, in which Xaa is hydrophobic (preferably Leu), and Yaa (Ala or Ser) and Zaa (Gly or Ala) have small, neutral side chains.. The protein operates within protein modification; lipoprotein biosynthesis (signal peptide cleavage). This protein specifically catalyzes the removal of signal peptides from prolipoproteins. This Burkholderia ambifaria (strain ATCC BAA-244 / DSM 16087 / CCUG 44356 / LMG 19182 / AMMD) (Burkholderia cepacia (strain AMMD)) protein is Lipoprotein signal peptidase.